A 423-amino-acid polypeptide reads, in one-letter code: Keratin, type I cytoskeletal 18 (423 aa).

An N-acetylserine modification is found at serine 2. The head stretch occupies residues 2 to 71 (SFTTRSTTFS…GLAGMGGVQT (70 aa)). Phosphoserine is present on residues serine 7, serine 11, serine 16, and serine 19. Residues serine 31 and serine 32 each carry the phosphoserine; alternate modification. 2 O-linked (GlcNAc) serine; alternate glycosylation sites follow: serine 31 and serine 32. The residue at position 35 (serine 35) is a Phosphoserine. Tyrosine 37 bears the Phosphotyrosine mark. A Phosphoserine modification is found at serine 43. Residue arginine 46 is modified to Omega-N-methylarginine. A Phosphoserine; alternate modification is found at serine 50. Serine 50 carries O-linked (GlcNAc) serine; alternate glycosylation. Residue serine 52 is modified to Phosphoserine; by MAPKAPK2 and MAPKAPK3. Residues serine 57 and serine 60 each carry the phosphoserine modification. The necessary for interaction with PNN stretch occupies residues 62–366 (GLAGMGGVQT…EALLNIKVKL (305 aa)). Positions 69-121 (VQTEKETMQDLNDRLASYLDKVKNLETENRRLESKIREYLEKRGPQGVRDWGH) are interaction with TRADD. Positions 72-107 (EKETMQDLNDRLASYLDKVKNLETENRRLESKIREY) are coil 1A. The IF rod domain maps to 72-384 (EKETMQDLND…RLLEDGDDFS (313 aa)). Lysine 73 participates in a covalent cross-link: Glycyl lysine isopeptide (Lys-Gly) (interchain with G-Cter in SUMO2). A Phosphoserine modification is found at serine 85. Residues 108 to 125 (LEKRGPQGVRDWGHYFKT) form a linker 1 region. Position 124 is an N6-acetyllysine (lysine 124). The interval 126-217 (IEDLRAQIFA…KNHEEEVQGL (92 aa)) is coil 1B. 2 positions are modified to phosphoserine: serine 137 and serine 170. A linker 12 region spans residues 218-241 (EAQIASSGLTVEVDAPKSQDLSKI). The interaction with DNAJB6 stretch occupies residues 236–384 (QDLSKIMADI…RLLEDGDDFS (149 aa)). A Glycyl lysine isopeptide (Lys-Gly) (interchain with G-Cter in SUMO2) cross-link involves residue lysine 240. Residues 242 to 380 (MADIRAQYEQ…ATYRRLLEDG (139 aa)) are coil 2. Threonine 295 carries the phosphothreonine modification. Residues lysine 363 and lysine 365 each participate in a glycyl lysine isopeptide (Lys-Gly) (interchain with G-Cter in SUMO2) cross-link. Residues 381 to 423 (DDFSLNDALDSSNSMQTVQRTTTRKVVDGKVVSETNDTRVLRH) are tail. A phosphoserine mark is found at serine 384, serine 391, serine 392, and serine 394. Threonine 397 is subject to Phosphothreonine. Lysine 410 is covalently cross-linked (Glycyl lysine isopeptide (Lys-Gly) (interchain with G-Cter in SUMO2)).

This sequence belongs to the intermediate filament family. Heterotetramer of two type I and two type II keratins. KRT18 associates with KRT8. Interacts with PNN and mutated CFTR. Interacts with YWHAE, YWHAH and YWHAZ only when phosphorylated. Interacts with DNAJB6, TCHP and TRADD. Interacts with the thrombin-antithrombin complex. Interacts with FAM83H. Interacts with EPPK1. Interacts with PKP1 and PKP2. Phosphorylation increases by IL-6. In terms of processing, proteolytically cleaved by caspases during epithelial cell apoptosis. Cleavage occurs at Asp-231 by either caspase-3, caspase-6 or caspase-7. Post-translationally, dephosphorylated by ethanol. O-GlcNAcylation increases solubility, and decreases stability by inducing proteasomal degradation. In terms of tissue distribution, expressed on the plasma membrane of hepatocytes and in the narrow apical portions of supporting cells in the vomeronasal sensory epithelium. Detected in the type III alveolar cells of the lung, in the proliferative crypt epithelium of the small intestine and in the older intragemmal cells of the tongue.

The protein localises to the nucleus matrix. Its subcellular location is the cytoplasm. It localises to the perinuclear region. It is found in the nucleus. The protein resides in the nucleolus. In terms of biological role, when phosphorylated, plays a role in filament reorganization. Involved in the delivery of mutated CFTR to the plasma membrane. Together with KRT8, is involved in interleukin-6 (IL-6)-mediated barrier protection. Involved in the uptake of thrombin-antithrombin complexes by hepatic cells. This Rattus norvegicus (Rat) protein is Keratin, type I cytoskeletal 18.